A 354-amino-acid chain; its full sequence is UPF0421 protein BH2644 (354 aa).

4 consecutive transmembrane segments (helical) span residues Ala22–Ile42, Leu60–Phe80, Thr107–Ala127, and Val133–Pro153.

The protein belongs to the UPF0421 family.

It is found in the cell membrane. This Halalkalibacterium halodurans (strain ATCC BAA-125 / DSM 18197 / FERM 7344 / JCM 9153 / C-125) (Bacillus halodurans) protein is UPF0421 protein BH2644.